The chain runs to 298 residues: Rhodomycin D methylesterase DnrP (298 aa).

Residues 25–277 (PLLLIAGGNL…VEIENMGHAL (253 aa)) enclose the AB hydrolase-1 domain.

This sequence belongs to the methyl esterase DnrP family.

The enzyme catalyses rhodomycin D + H2O = 10-carboxy-13-deoxycarminomycin + methanol + H(+). The catalysed reaction is 4-O-methylrhodomycin D + H2O = 10-carboxy-13-deoxydaunorubicin + methanol + H(+). It functions in the pathway antibiotic biosynthesis; daunorubicin biosynthesis. It participates in antibiotic biosynthesis; carminomycin biosynthesis. In terms of biological role, involved in the biosynthesis of the anthracyclines carminomycin and daunorubicin (daunomycin) which are aromatic polyketide antibiotics that exhibit high cytotoxicity and are widely applied in the chemotherapy of a variety of cancers. Catalyzes the removal of methyl group from the carbomethoxy group of rhodomycin D (10-carbomethoxy-13-deoxycarminomycin) and 4-O-methylrhodomycin D to yield 10-carboxy-13-deoxycarminomycin and 10-carboxy-13-deoxydaunorubicin, respectively. Could be also involved in the decarboxylation of 10-carboxy-13-deoxycarminomycin and 10-carboxy-13-deoxydaunorubicin to yield 13-deoxycarminomycin and 13-deoxydaunorubicin, respectively. It seems that DnrK may influence the ability of DnrP to carry out the decarboxylation. The chain is Rhodomycin D methylesterase DnrP (dnrP) from Streptomyces peucetius.